The primary structure comprises 323 residues: tRNA U34 carboxymethyltransferase (323 aa).

Residues lysine 91, tryptophan 105, lysine 110, glycine 130, 152 to 154, 181 to 182, methionine 196, tyrosine 200, and arginine 315 contribute to the carboxy-S-adenosyl-L-methionine site; these read DPT and IE.

The protein belongs to the class I-like SAM-binding methyltransferase superfamily. CmoB family. In terms of assembly, homotetramer.

The catalysed reaction is carboxy-S-adenosyl-L-methionine + 5-hydroxyuridine(34) in tRNA = 5-carboxymethoxyuridine(34) in tRNA + S-adenosyl-L-homocysteine + H(+). Functionally, catalyzes carboxymethyl transfer from carboxy-S-adenosyl-L-methionine (Cx-SAM) to 5-hydroxyuridine (ho5U) to form 5-carboxymethoxyuridine (cmo5U) at position 34 in tRNAs. This is tRNA U34 carboxymethyltransferase from Escherichia coli O7:K1 (strain IAI39 / ExPEC).